Reading from the N-terminus, the 145-residue chain is 3-dehydroquinate dehydratase (145 aa).

The Proton acceptor role is filled by Tyr-23. Residues Asn-74, His-80, and Asp-87 each contribute to the substrate site. Catalysis depends on His-100, which acts as the Proton donor. Substrate contacts are provided by residues 101-102 (IS) and Arg-111.

This sequence belongs to the type-II 3-dehydroquinase family. As to quaternary structure, homododecamer.

The enzyme catalyses 3-dehydroquinate = 3-dehydroshikimate + H2O. The protein operates within metabolic intermediate biosynthesis; chorismate biosynthesis; chorismate from D-erythrose 4-phosphate and phosphoenolpyruvate: step 3/7. Catalyzes a trans-dehydration via an enolate intermediate. The chain is 3-dehydroquinate dehydratase from Dictyoglomus turgidum (strain DSM 6724 / Z-1310).